Reading from the N-terminus, the 233-residue chain is Adenosylcobinamide-GDP ribazoletransferase (233 aa).

7 helical membrane passes run 24 to 44 (LWAL…VLYL), 46 to 66 (LPLS…LLHL), 96 to 116 (IAGV…LPLL), 117 to 137 (PFYA…LALA), 158 to 178 (QLTL…YIEP), 181 to 198 (ISSL…RLSL), and 209 to 229 (IGAV…VVWV).

This sequence belongs to the CobS family. Mg(2+) serves as cofactor.

It is found in the cell membrane. The enzyme catalyses alpha-ribazole + adenosylcob(III)inamide-GDP = adenosylcob(III)alamin + GMP + H(+). The catalysed reaction is alpha-ribazole 5'-phosphate + adenosylcob(III)inamide-GDP = adenosylcob(III)alamin 5'-phosphate + GMP + H(+). It participates in cofactor biosynthesis; adenosylcobalamin biosynthesis; adenosylcobalamin from cob(II)yrinate a,c-diamide: step 7/7. Functionally, joins adenosylcobinamide-GDP and alpha-ribazole to generate adenosylcobalamin (Ado-cobalamin). Also synthesizes adenosylcobalamin 5'-phosphate from adenosylcobinamide-GDP and alpha-ribazole 5'-phosphate. The protein is Adenosylcobinamide-GDP ribazoletransferase of Thermococcus gammatolerans (strain DSM 15229 / JCM 11827 / EJ3).